Here is a 252-residue protein sequence, read N- to C-terminus: CD99 antigen-like protein 2 (252 aa).

The first 23 residues, 1-23 (MEKTLWTWTLLAVFSLLVVKGMS), serve as a signal peptide directing secretion. Positions 30–170 (DALGDDDDDE…DLDPADDNNY (141 aa)) are disordered. Positions 57-68 (AAVKPTLKPVKP) are enriched in low complexity. Over residues 96–120 (NDIKGKGKDSGKGDKEVGGGSRDDG) the composition is skewed to basic and acidic residues. The chain crosses the membrane as a helical span at residues 178 to 198 (TIAGIVSAVAMALVGAVSSYI).

Belongs to the CD99 family.

It is found in the cell membrane. The protein resides in the cell junction. Functionally, may function as a homophilic adhesion molecule. In Danio rerio (Zebrafish), this protein is CD99 antigen-like protein 2 (cd99l2).